We begin with the raw amino-acid sequence, 472 residues long: Alanine--anticapsin ligase (472 aa).

Glu109 lines the Mg(2+) pocket. ATP contacts are provided by Lys138 and Lys178. The region spanning 142–355 is the ATP-grasp domain; it reads RDAFNKAGVK…MAQLLLDVLC (214 aa). A Mg(2+)-binding site is contributed by Leu182. Residues 184–185, 226–229, and Gln268 contribute to the ATP site; these read SS and EEFL. Substrate is bound by residues Glu273 and 309-311; that span reads HTE. The Mg(2+) site is built by Glu311 and Glu324. 328-331 provides a ligand contact to substrate; it reads RFAG.

Monomer or homodimer. Mg(2+) is required as a cofactor.

The catalysed reaction is L-anticapsin + L-alanine + ATP = bacilysin + ADP + phosphate + H(+). It participates in antibiotic biosynthesis; bacilysin biosynthesis. Its function is as follows. Part of the bacABCDEFG operon responsible for the biosynthesis of bacilysin, an irreversible inactivator of the glutaminase domain of glucosamine synthetase. Catalyzes the formation of alpha-dipeptides from various L-amino acids in the presence of ATP. In vivo catalyzes the ligation of L-alanine and L-anticapsin (epoxycyclohexanonyl-Ala) to produce the final bacilysin antibiotic (L-Ala-L-4S-cyclohexenonyl-Ala dipeptide). The substrate specificity is restricted to small amino acids such as L-Ala, for the N-terminal end of the dipeptide, whereas a wide range of hydrophobic amino acids such as L-Phe, L-Tyr and L-Met are recognized for the C-terminal end. The polypeptide is Alanine--anticapsin ligase (Bacillus subtilis (strain 168)).